The primary structure comprises 189 residues: Cyclin-dependent kinase inhibitor 5 (189 aa).

A compositionally biased stretch (polar residues) spans 73 to 93 (KQQKQQLIPSVNQCQTKNPRA). Positions 73 to 107 (KQQKQQLIPSVNQCQTKNPRASSGPAKKLEPDTTT) are disordered.

It belongs to the CDI family. ICK/KRP subfamily. Interacts with CYCD4-1. Does not interact with CDKA-1. As to expression, expressed in flowers and at lower levels in roots and leaves.

It localises to the nucleus. Its subcellular location is the nucleoplasm. Its function is as follows. Inhibits CYCD2-1/CDKA-1 complex kinase activity without interaction with the complex. This is Cyclin-dependent kinase inhibitor 5 (KRP5) from Arabidopsis thaliana (Mouse-ear cress).